A 78-amino-acid chain; its full sequence is Acyl carrier protein (78 aa).

The Carrier domain occupies 2-77; sequence STIEERVKKI…EAIDYVTAHA (76 aa). Ser37 carries the O-(pantetheine 4'-phosphoryl)serine modification.

It belongs to the acyl carrier protein (ACP) family. In terms of processing, 4'-phosphopantetheine is transferred from CoA to a specific serine of apo-ACP by AcpS. This modification is essential for activity because fatty acids are bound in thioester linkage to the sulfhydryl of the prosthetic group.

It is found in the cytoplasm. It functions in the pathway lipid metabolism; fatty acid biosynthesis. Carrier of the growing fatty acid chain in fatty acid biosynthesis. The protein is Acyl carrier protein of Ectopseudomonas mendocina (strain ymp) (Pseudomonas mendocina).